The following is a 441-amino-acid chain: Methionine gamma-lyase (441 aa).

The disordered stretch occupies residues 1-25 (MAHFLETQEPLVFSGKKRNDRDDED). An N6-(pyridoxal phosphate)lysine modification is found at Lys-248.

Belongs to the trans-sulfuration enzymes family. In terms of assembly, homotetramer. The cofactor is pyridoxal 5'-phosphate. Expressed in roots, stems, siliques, leaves, flowers and seeds after imbibition (at protein level). Transcripts accumulate in dry mature seeds, but at protein level, only present upon imbibition.

Its subcellular location is the cytoplasm. The catalysed reaction is L-methionine + H2O = methanethiol + 2-oxobutanoate + NH4(+). In terms of biological role, catalyzes the degradation of L-methionine to alpha-ketobutyrate, methanethiol and ammonia. Exhibits a high activity toward L-methionine, L-ethionine, L-homocysteine and seleno-L-methionine, but not L-cysteine. Involved in an alternative cysteine biosynthesis pathway to the reverse trans-sulfuration pathway (methionine-&gt;homocysteine-&gt;cystathionine-&gt;cysteine) in which methanethiol is an intermediate. Also mediates an alternative isoleucine biosynthesis pathway in which 2-ketobutyrate is an intermediate. The polypeptide is Methionine gamma-lyase (MGL) (Arabidopsis thaliana (Mouse-ear cress)).